The chain runs to 467 residues: Putative ankyrin repeat protein R911 (467 aa).

ANK repeat units follow at residues 38-70, 79-108, 109-138, 140-168, 170-198, 199-228, 229-258, 260-288, 289-318, 320-348, 350-378, 379-408, 410-438, and 440-467; these read IKTDIIEYVMENDLIDILKYLSLLKKLGHPIIV, TLNKYLIKNCGENQLEIVKFLVSLGADIRA, GNDYAVGLSSQNGHLEVVKYLVNQGSDIRA, NDYAVRWASGNGHLEVVKYLVSQGANIRA, NDHAIGLASYYGYLEVVKYLVSQGADIRS, DNDYAVRMASRNGHIEVVEYLVSQGANIRS, DNDYAVRLASQNGHLEVVKYLVSQGADIKS, NDYAVRLASQNGHLEVVEYLVTQGTNIRV, NNNYAVEWASKNGNLEVVKYLISQGADIIA, NNFAVRWASRNGHLEVVKYLVSLGADIKS, NDYAVRWASGNGHLEVVKYLVSQGSDIRV, ENDYAVRWASRNGHFDVIKYLVSQGADIRS, NDYAVKWASENGHLEVVKFLVSLGADIKA, and DDYAVRWASEKGHLEVVEYLVSQGAVLS.

This chain is Putative ankyrin repeat protein R911, found in Acanthamoeba polyphaga mimivirus (APMV).